The following is a 216-amino-acid chain: LexA repressor (216 aa).

Residues 28 to 48 constitute a DNA-binding region (H-T-H motif); it reads RAEIAAEFGFSSPNAAEEHLR. Residues S134 and K171 each act as for autocatalytic cleavage activity in the active site.

This sequence belongs to the peptidase S24 family. Homodimer.

It catalyses the reaction Hydrolysis of Ala-|-Gly bond in repressor LexA.. Its function is as follows. Represses a number of genes involved in the response to DNA damage (SOS response), including recA and lexA. In the presence of single-stranded DNA, RecA interacts with LexA causing an autocatalytic cleavage which disrupts the DNA-binding part of LexA, leading to derepression of the SOS regulon and eventually DNA repair. The chain is LexA repressor from Ralstonia pickettii (strain 12J).